The following is a 767-amino-acid chain: Syn-copalyl diphosphate synthase, chloroplastic (767 aa).

Residues 1–47 (MPVFTASFQCVTLFGQPASAADAQPLLQGQRPFLHLHARRRRPCGPM) constitute a chloroplast transit peptide. The disordered stretch occupies residues 45–74 (GPMLISKSPPYPASEETREWEADGQHEHTD). Positions 59–74 (EETREWEADGQHEHTD) are enriched in basic and acidic residues. Lys-233 is a binding site for substrate. Mg(2+) is bound by residues Asp-365 and Asp-367. Residues 365–368 (DIDD) carry the DXDD motif motif. A substrate-binding site is contributed by Lys-453.

Belongs to the terpene synthase family. It depends on Mg(2+) as a cofactor.

Its subcellular location is the plastid. The protein localises to the chloroplast. The catalysed reaction is (2E,6E,10E)-geranylgeranyl diphosphate = 9alpha-copalyl diphosphate. In terms of biological role, catalyzes the conversion of geranylgeranyl diphosphate to the phytoalexin precursor syn-copalyl diphosphate. Required for the biosynthesis of momilactones that exude from roots and act as allelochemicals against lowland weeds in paddy soil. The protein is Syn-copalyl diphosphate synthase, chloroplastic of Oryza sativa subsp. japonica (Rice).